Reading from the N-terminus, the 699-residue chain is Polyribonucleotide nucleotidyltransferase (699 aa).

Asp-487 and Asp-493 together coordinate Mg(2+). The region spanning 554-613 (PRMLNMKINPEKIRDVIGKGGAVIRALQEETGTVIEIEDDGSITISSVSAEGAQKAKARI) is the KH domain. One can recognise an S1 motif domain in the interval 623–691 (GKVYEGTVVR…ERGKIRLSMK (69 aa)).

This sequence belongs to the polyribonucleotide nucleotidyltransferase family. It depends on Mg(2+) as a cofactor.

It is found in the cytoplasm. It catalyses the reaction RNA(n+1) + phosphate = RNA(n) + a ribonucleoside 5'-diphosphate. In terms of biological role, involved in mRNA degradation. Catalyzes the phosphorolysis of single-stranded polyribonucleotides processively in the 3'- to 5'-direction. In Azoarcus sp. (strain BH72), this protein is Polyribonucleotide nucleotidyltransferase.